The primary structure comprises 261 residues: 1-(5-phosphoribosyl)-5-[(5-phosphoribosylamino)methylideneamino] imidazole-4-carboxamide isomerase (261 aa).

The active-site Proton acceptor is the Asp-8. Catalysis depends on Asp-139, which acts as the Proton donor.

It belongs to the HisA/HisF family.

Its subcellular location is the cytoplasm. It carries out the reaction 1-(5-phospho-beta-D-ribosyl)-5-[(5-phospho-beta-D-ribosylamino)methylideneamino]imidazole-4-carboxamide = 5-[(5-phospho-1-deoxy-D-ribulos-1-ylimino)methylamino]-1-(5-phospho-beta-D-ribosyl)imidazole-4-carboxamide. The protein operates within amino-acid biosynthesis; L-histidine biosynthesis; L-histidine from 5-phospho-alpha-D-ribose 1-diphosphate: step 4/9. This chain is 1-(5-phosphoribosyl)-5-[(5-phosphoribosylamino)methylideneamino] imidazole-4-carboxamide isomerase, found in Janthinobacterium sp. (strain Marseille) (Minibacterium massiliensis).